Consider the following 90-residue polypeptide: MSQRKIQKVMVQPVNLIFRYLQNRTRVQIWLYEDVTHRLEGYIIGFDEFMNVVFDEAEEVNMKTKGRNKIGRILLKGDNITLIHAAAQEA.

The Sm domain occupies V14–E89.

The protein belongs to the snRNP Sm proteins family. In terms of assembly, core component of the spliceosomal U1, U2, U4 and U5 small nuclear ribonucleoproteins (snRNPs), the building blocks of the spliceosome.

The protein resides in the nucleus. Its subcellular location is the cytoplasm. The protein localises to the cytosol. In terms of biological role, plays a role in pre-mRNA splicing as a core component of the spliceosomal U1, U2, U4 and U5 small nuclear ribonucleoproteins (snRNPs), the building blocks of the spliceosome. The protein is Probable small nuclear ribonucleoprotein E (snr-6) of Caenorhabditis briggsae.